The chain runs to 316 residues: Replication initiation protein (316 aa).

It belongs to the initiator RepB protein family.

The polypeptide is Replication initiation protein (repA) (Escherichia coli).